The sequence spans 509 residues: Solute carrier family 2, facilitated glucose transporter member 4 (509 aa).

Residues 1–23 (MPSGFQQIGSDDGEPPRQRVTGT) are Cytoplasmic-facing. The interaction with SRFBP1 stretch occupies residues 7–13 (QIGSDDG). Ser10 is subject to Phosphoserine. A helical transmembrane segment spans residues 24 to 44 (LVLAVFSAVLGSLQFGYNIGV). Over 45–80 (INAPQKVIEQSYNATWLGRQGPGGPDSIPQGTLTTL) the chain is Extracellular. Asn57 is a glycosylation site (N-linked (GlcNAc...) asparagine). Residues 81-101 (WALSVAIFSVGGMISSFLIGI) form a helical membrane-spanning segment. At 102–110 (ISQWLGRKR) the chain is on the cytoplasmic side. A helical membrane pass occupies residues 111–131 (AMLANNVLAVLGGALMGLANA). Residues 132–141 (AASYEILILG) lie on the Extracellular side of the membrane. A helical membrane pass occupies residues 142–162 (RFLIGAYSGLTSGLVPMYVGE). The Cytoplasmic segment spans residues 163 to 170 (IAPTHLRG). A helical transmembrane segment spans residues 171–191 (ALGTLNQLAIVIGILVAQVLG). Residue Gln177 participates in D-glucose binding. The Extracellular portion of the chain corresponds to 192-200 (LESMLGTAT). A helical membrane pass occupies residues 201–221 (LWPLLLALTVLPALLQLILLP). Residues 222 to 286 (FCPESPRYLY…QLLGSRTHRQ (65 aa)) are Cytoplasmic-facing. Cys223 carries S-palmitoyl cysteine lipidation. At Ser274 the chain carries Phosphoserine; by SGK1. Residues 287-307 (PLIIAVVLQLSQQLSGINAVF) traverse the membrane as a helical segment. D-glucose contacts are provided by residues 298-299 (QQ) and Asn304. The Extracellular portion of the chain corresponds to 308–322 (YYSTSIFESAGVGQP). Residues 323–343 (AYATIGAGVVNTVFTLVSVLL) form a helical membrane-spanning segment. Asn333 contributes to the D-glucose binding site. Residues 344–352 (VERAGRRTL) lie on the Cytoplasmic side of the membrane. The chain crosses the membrane as a helical span at residues 353-373 (HLLGLAGMCGCAILMTVALLL). The Extracellular portion of the chain corresponds to 374 to 384 (LERVPAMSYVS). Residues 385–405 (IVAIFGFVAFFEIGPGPIPWF) form a helical membrane-spanning segment. 2 residues coordinate D-glucose: Glu396 and Trp404. Residues 406–416 (IVAELFSQGPR) lie on the Cytoplasmic side of the membrane. A helical membrane pass occupies residues 417–437 (PAAMAVAGFSNWTCNFIVGMG). The Extracellular portion of the chain corresponds to 438 to 444 (FQYVADA). The helical transmembrane segment at 445 to 465 (MGPYVFLLFAVLLLGFFIFTF) threads the bilayer. Topologically, residues 466–508 (LKVPETRGRTFDQISAAFRRTPSLLEQEVKPSTELEYLGPDEN) are cytoplasmic. A Phosphothreonine modification is found at Thr486. Ser488 carries the phosphoserine modification. The short motif at 489 to 490 (LL) is the Dileucine internalization motif element.

This sequence belongs to the major facilitator superfamily. Sugar transporter (TC 2.A.1.1) family. Glucose transporter subfamily. As to quaternary structure, binds to DAXX. Interacts via its N-terminus with SRFBP1. Interacts with NDUFA9. Interacts with TRARG1; the interaction is required for proper SLC2A4 recycling after insulin stimulation. In terms of processing, sumoylated. Post-translationally, palmitoylated. Palmitoylation by ZDHHC7 controls the insulin-dependent translocation of GLUT4 to the plasma membrane. In terms of tissue distribution, expressed in skeletal and cardiac muscles. Expressed in brown and white adipose tissues.

Its subcellular location is the cell membrane. It localises to the endomembrane system. The protein resides in the cytoplasm. It is found in the perinuclear region. The catalysed reaction is D-glucose(out) = D-glucose(in). Insulin-regulated facilitative glucose transporter, which plays a key role in removal of glucose from circulation. Response to insulin is regulated by its intracellular localization: in the absence of insulin, it is efficiently retained intracellularly within storage compartments in muscle and fat cells. Upon insulin stimulation, translocates from these compartments to the cell surface where it transports glucose from the extracellular milieu into the cell. This chain is Solute carrier family 2, facilitated glucose transporter member 4, found in Mus musculus (Mouse).